Here is a 1223-residue protein sequence, read N- to C-terminus: MMSLSVRPQRRLLSARVSRSQSFAGVLGSHERGPRSFTVFSPPGPPRKPLVLSRVSRMFSVAHPAPKVPQPERLDLVYTALKRGLTAYLEVHQQEQEKLQRQIKESKRNSRLGFLYDLDKQVKSIERFLRRLEFHASKIDELYEAYCVQRRLRDGAYNMVRAYSTGSPGSREARDSLAEATRGHREYTESMCLLENELEAQLGEFHLRMKGLAGFARLCVGDQYEICMKYGRQRWKLRGRIESSGKQVWDSEETVFLPLLTEFLSIKVTELKGLANHVVVGSVSCETKDLFAALPQVVAVDINDLGTIKLSLEVIWSPFDKDDQPSAASTVNKASTVTKRFSTYSQSPPDTPSLREQAFYNMLRRQEELENGTAWSLSSESSDDSSSPQLSGTARHSTPKPLVQQPEPLPVQVAFRRPESLTSGSMDEEPAMTPSLVNGHAPYSRTLSHISEASVDAALTEAVEAVDSQSPIPGPSPLVYPDSTHVERVSSVLPVLNNGHSATSPALSTTGPAPTFIDPAPTTQLDLVHKTTDSAPSELPSITHTTTSSAYSAVSLVNSVPSLTSTTIGSAHTTTPSPLTSTGSVPNATDSTQATPSPTHSTPSPTHTTIRLTHTTVSPTHSSPSPIHTTPSPTHTTVSPTCTTPSSGHSTTSPTQEAKMSTHTTGAVGPVQTTTSPISTTESPSPSTDVAIISSSSAESTGPGTEPLPCSHPASPPYTKADPTASCTSYQSLASSGSKPLTSPAPDSPEQIPKSPSSSPSSSAPEPQHSEHNLAAVAQAPVPEATGGAGDRRLEEALGTLMSALDDYRGQFPELQGLEQEVTRLESLLMQRQGLTRSRASSLSITVEHALESFSFLNDDEDEDNDGPGDRHTSSPEVVAEDRLDSSNGQSLSTGCSALDATLVQHLYHCSRLLLKLGTFGPLRCQEAWALERLLREARVFQEVCERSKLWGNSATSAQEVVQFSASRPGFLTFWDQCTEGLSPFICSVERVLLTFCSQYGARLSLRQPGLAEAVCVKFLEDALGQKLPRRPQPGPGEQFTIFQFWSYVEALDSPSMDAYVTETAEEVLLVQNLNSDDQAVVLKALRLAPEGRLRKDGLRALSSLLVHGNNKVMAAVSTQLRSLSLGPVFRERALLCFLDQLEDGDVQTRVAGCLALGCIKAPEGIEPLVYLCQTDTEAVREAARQSLQQCGEEGQSAHRQLEESLDALPCIFGPSSMASTAF.

Position 22 is a phosphoserine (Ser-22). A coiled-coil region spans residues 83-112 (RGLTAYLEVHQQEQEKLQRQIKESKRNSRL). 2 positions are modified to phosphoserine: Ser-345 and Ser-347. A Phosphothreonine modification is found at Thr-351. The tract at residues 371-411 (NGTAWSLSSESSDDSSSPQLSGTARHSTPKPLVQQPEPLPV) is disordered. Low complexity-rich tracts occupy residues 376–391 (SLSS…PQLS) and 399–411 (PKPL…PLPV). Residues Ser-451, Ser-454, and Ser-468 each carry the phosphoserine modification. Low complexity-rich tracts occupy residues 566–586 (TTIG…GSVP) and 595–655 (TPSP…TSPT). Disordered stretches follow at residues 566-771 (TTIG…QHSE) and 856-887 (FLND…LDSS). Polar residues predominate over residues 656–665 (QEAKMSTHTT). Residues 673–688 (TTTSPISTTESPSPST) are compositionally biased toward low complexity. 2 stretches are compositionally biased toward polar residues: residues 693–703 (ISSSSAESTGP) and 725–741 (ASCT…SKPL). Phosphoserine is present on Ser-748. A compositionally biased stretch (low complexity) spans 748–767 (SPEQIPKSPSSSPSSSAPEP). The segment covering 858-867 (NDDEDEDNDG) has biased composition (acidic residues). Over residues 868–885 (PGDRHTSSPEVVAEDRLD) the composition is skewed to basic and acidic residues. Phosphoserine occurs at positions 874 and 875.

This sequence belongs to the RIPOR family. As to quaternary structure, interacts (via N-terminus) with RHOA (GTP-bound form); this interaction links active RHOA to STK24 and STK26 kinases. Interacts with RHOB. Interacts with RHOC. Interacts (via C-terminus) with PDCD10; this interaction occurs in a Rho-independent manner. Interacts (via C-terminus) with STK24; this interaction occurs in a PDCD10-dependent and Rho-independent manner. Interacts (via C-terminus) with STK26; this interaction occurs in a PDCD10-dependent and Rho-independent manner. Interacts (via N-terminus) with 14-3-3 proteins; these interactions occur in a Rho-dependent manner. Expressed in the kidney exclusively by glomerular podocytes.

It localises to the cytoplasm. The protein resides in the golgi apparatus. Its function is as follows. Downstream effector protein for Rho-type small GTPases that plays a role in cell polarity and directional migration. Acts as an adapter protein, linking active Rho proteins to STK24 and STK26 kinases, and hence positively regulates Golgi reorientation in polarized cell migration upon Rho activation. Involved in the subcellular relocation of STK26 from the Golgi to cytoplasm punctae in a Rho- and PDCD10-dependent manner upon serum stimulation. The protein is Rho family-interacting cell polarization regulator 1 of Mus musculus (Mouse).